A 390-amino-acid chain; its full sequence is O-glycoside alpha-1,2-mannosyltransferase omh1 (390 aa).

Glu279 acts as the Nucleophile in catalysis.

This sequence belongs to the glycosyltransferase 15 family.

The protein resides in the endoplasmic reticulum. Its subcellular location is the golgi apparatus. Functionally, mannosyltransferase involved in O-glycosylation of cell wall and secreted proteins. Plays a major role in extending alpha-1,2-linked mannose in the O-glycan pathway. The protein is O-glycoside alpha-1,2-mannosyltransferase omh1 (omh1) of Schizosaccharomyces pombe (strain 972 / ATCC 24843) (Fission yeast).